A 374-amino-acid polypeptide reads, in one-letter code: bZIP transcription factor TRAB1 (374 aa).

The span at 1–13 (MDLKDGGGSERRG) shows a compositional bias: basic and acidic residues. Disordered stretches follow at residues 1 to 23 (MDLK…AGAA) and 117 to 142 (ASPG…QPTL). The segment covering 14 to 23 (AAAGAGAGAA) has biased composition (low complexity). The bZIP domain maps to 286 to 349 (VERRQRRMIK…KNFFPEMQKN (64 aa)). Residues 288–307 (RRQRRMIKNRESAARSRARK) are basic motif. A leucine-zipper region spans residues 314–335 (LEAEVQKLKEQNMELQKKQEEI).

The protein belongs to the bZIP family. As to quaternary structure, interacts with VP1 (via N-terminus). In terms of tissue distribution, expressed in roots, leaves and embryos.

It localises to the nucleus. Its function is as follows. Transcription activator that mediates abscisic acid (ABA) signaling. Binds specifically to the ABA-responsive element (ABRE) of the EMP1 and RAB16A gene promoters. This Oryza sativa subsp. japonica (Rice) protein is bZIP transcription factor TRAB1.